We begin with the raw amino-acid sequence, 460 residues long: V-type ATP synthase beta chain (460 aa).

The protein belongs to the ATPase alpha/beta chains family.

Produces ATP from ADP in the presence of a proton gradient across the membrane. The V-type beta chain is a regulatory subunit. The chain is V-type ATP synthase beta chain from Dictyoglomus turgidum (strain DSM 6724 / Z-1310).